The following is a 332-amino-acid chain: 2,3-diketo-L-gulonate reductase (332 aa).

The active-site Proton donor is the histidine 44. Residues 168–174 (ITMVDMS), 224–225 (WK), and 304–306 (GHE) contribute to the NAD(+) site.

This sequence belongs to the LDH2/MDH2 oxidoreductase family. DlgD subfamily. As to quaternary structure, homodimer.

The protein resides in the cytoplasm. The catalysed reaction is 3-dehydro-L-gulonate + NAD(+) = 2,3-dioxo-L-gulonate + NADH + H(+). It carries out the reaction 3-dehydro-L-gulonate + NADP(+) = 2,3-dioxo-L-gulonate + NADPH + H(+). Its function is as follows. Catalyzes the reduction of 2,3-diketo-L-gulonate in the presence of NADH, to form 3-keto-L-gulonate. This is 2,3-diketo-L-gulonate reductase from Salmonella paratyphi A (strain ATCC 9150 / SARB42).